Here is a 122-residue protein sequence, read N- to C-terminus: Large ribosomal subunit protein uL14 (122 aa).

It belongs to the universal ribosomal protein uL14 family. As to quaternary structure, part of the 50S ribosomal subunit. Forms a cluster with proteins L3 and L19. In the 70S ribosome, L14 and L19 interact and together make contacts with the 16S rRNA in bridges B5 and B8.

Functionally, binds to 23S rRNA. Forms part of two intersubunit bridges in the 70S ribosome. In Cupriavidus metallidurans (strain ATCC 43123 / DSM 2839 / NBRC 102507 / CH34) (Ralstonia metallidurans), this protein is Large ribosomal subunit protein uL14.